The chain runs to 274 residues: MTRSHRLLLLLLLIFQTAQRLTTADPNDEACLKNLRQNLEDPASNLRNWTNSVFSNPCSGFTSYLPGATCNNGRIYKLSLTNLSLRGSISPFLSNCTNLQSLDLSSNQISGVIPPEIQYLVNLAVLNLSSNHLSGEITPQLALCAYLNVIDLHDNELSGQIPQQLGLLARLSAFDVSNNKLSGQIPTYLSNRTGNFPRFNASSFIGNKGLYGYPLQEMMMKSKGLSVMAIVGIGLGSGIASLMISFTGVCLWLRITEKKIVEEEGKISQSMPDY.

An N-terminal signal peptide occupies residues 1–24 (MTRSHRLLLLLLLIFQTAQRLTTA). At 25 to 223 (DPNDEACLKN…PLQEMMMKSK (199 aa)) the chain is on the extracellular side. Asparagine 48, asparagine 82, and asparagine 95 each carry an N-linked (GlcNAc...) asparagine glycan. 4 LRR repeats span residues 96-121 (CTNL…QYLV), 123-144 (LAVL…LALC), 145-168 (AYLN…LGLL), and 169-192 (ARLS…LSNR). An N-linked (GlcNAc...) asparagine glycan is attached at asparagine 127. 2 N-linked (GlcNAc...) asparagine glycosylation sites follow: asparagine 191 and asparagine 200. The helical transmembrane segment at 224–244 (GLSVMAIVGIGLGSGIASLMI) threads the bilayer. The Cytoplasmic segment spans residues 245–274 (SFTGVCLWLRITEKKIVEEEGKISQSMPDY).

Belongs to the RLP family.

The protein localises to the cell membrane. The sequence is that of Receptor-like protein 44 from Arabidopsis thaliana (Mouse-ear cress).